Consider the following 240-residue polypeptide: Triosephosphate isomerase (240 aa).

9 to 11 (NWK) is a binding site for substrate. His-94 acts as the Electrophile in catalysis. Glu-163 functions as the Proton acceptor in the catalytic mechanism. Residues Gly-169, Ser-202, and 223 to 224 (GG) each bind substrate.

This sequence belongs to the triosephosphate isomerase family. In terms of assembly, homodimer.

Its subcellular location is the cytoplasm. The enzyme catalyses D-glyceraldehyde 3-phosphate = dihydroxyacetone phosphate. Its pathway is carbohydrate biosynthesis; gluconeogenesis. The protein operates within carbohydrate degradation; glycolysis; D-glyceraldehyde 3-phosphate from glycerone phosphate: step 1/1. Involved in the gluconeogenesis. Catalyzes stereospecifically the conversion of dihydroxyacetone phosphate (DHAP) to D-glyceraldehyde-3-phosphate (G3P). This is Triosephosphate isomerase from Gloeobacter violaceus (strain ATCC 29082 / PCC 7421).